Consider the following 1427-residue polypeptide: A disintegrin and metalloproteinase with thrombospondin motifs 13 (1427 aa).

The signal sequence occupies residues 1–29 (MHQRHPRARCPPLCVAGILACGFLLGCWG). Positions 30–74 (PSHFQQSCLQALEPQAVSSYLSPGAPLKGRPPSPGFQRQRQRQRR) are excised as a propeptide. Residues 51 to 70 (SPGAPLKGRPPSPGFQRQRQ) form a disordered region. Residues 80–286 (LHLELLVAVG…GRARCVWDPP (207 aa)) form the Peptidase M12B domain. Glutamate 83 is a binding site for Ca(2+). Asparagine 142 and asparagine 146 each carry an N-linked (GlcNAc...) asparagine glycan. Cystine bridges form between cysteine 155–cysteine 208, cysteine 202–cysteine 281, and cysteine 242–cysteine 265. Residues aspartate 173, aspartate 182, glutamate 184, aspartate 187, and glutamate 212 each coordinate Ca(2+). Histidine 224 is a binding site for Zn(2+). Residue glutamate 225 is part of the active site. Histidine 228 and histidine 234 together coordinate Zn(2+). Ca(2+) contacts are provided by cysteine 281 and aspartate 284. Residues 287 to 383 (RPQPGSAGHP…LVELTPIAAV (97 aa)) form the Disintegrin domain. 4 disulfides stabilise this stretch: cysteine 311/cysteine 337, cysteine 322/cysteine 347, cysteine 332/cysteine 366, and cysteine 360/cysteine 371. One can recognise a TSP type-1 1 domain in the interval 384-439 (HGRWSSWGPRSPCSRSCGGGVVTRRRQCNNPRPAFGGRACVGADLQAEMCNTQACE). Tryptophan 387 is a glycosylation site (C-linked (Man) tryptophan). 8 disulfides stabilise this stretch: cysteine 396/cysteine 433, cysteine 400/cysteine 438, cysteine 411/cysteine 423, cysteine 450/cysteine 487, cysteine 483/cysteine 522, cysteine 508/cysteine 527, cysteine 532/cysteine 548, and cysteine 545/cysteine 555. Serine 399 carries an O-linked (Fuc...) serine glycan. A cysteine-rich region spans residues 440-556 (KTQLEFMSQQ…VCGGDNSTCS (117 aa)). Positions 498 to 500 (RGD) match the Cell attachment site motif. N-linked (GlcNAc...) asparagine glycosylation is found at asparagine 552, asparagine 579, and asparagine 614. The interval 556–685 (SPRKGSFTAG…TYFQPKPRQA (130 aa)) is spacer. N-linked (GlcNAc...) (complex) asparagine glycosylation occurs at asparagine 667. TSP type-1 domains are found at residues 682-730 (PRQA…SQQP), 742-805 (CPPY…QPCP), 808-859 (WEVS…PEPC), 896-950 (VWTP…QAVP), 951-1011 (CPAR…SLEP), 1012-1068 (CPPR…VPCL), and 1072-1131 (CTYR…GPCV). O-linked (Fuc...) serine glycosylation is present at serine 698. Asparagine 707 is a glycosylation site (N-linked (GlcNAc...) (complex) asparagine). Residue serine 757 is glycosylated (O-linked (Fuc...) serine). Asparagine 828 carries an N-linked (GlcNAc...) asparagine glycan. Residues serine 907, serine 965, serine 1027, and serine 1087 are each glycosylated (O-linked (Fuc...) serine). CUB domains lie at 1192–1298 (CGRQ…FYRE) and 1299–1427 (CDMQ…KEGT). Residues asparagine 1235 and asparagine 1354 are each glycosylated (N-linked (GlcNAc...) asparagine).

Zn(2+) is required as a cofactor. Requires Ca(2+) as cofactor. In terms of processing, glycosylated. O-fucosylated by POFUT2 on a serine or a threonine residue found within the consensus sequence C1-X(2)-(S/T)-C2-G of the TSP type-1 repeat domains where C1 and C2 are the first and second cysteine residue of the repeat, respectively. Fucosylated repeats can then be further glycosylated by the addition of a beta-1,3-glucose residue by the glucosyltransferase, B3GALTL. Fucosylation mediates the efficient secretion of ADAMTS13. May also be C-glycosylated on tryptophan residues within the consensus sequence W-X-X-W of the TPRs, and also N-glycosylated. These other glycosylations can also facilitate secretion. The precursor is processed by a furin endopeptidase which cleaves off the pro-domain. In terms of tissue distribution, plasma. Expressed primarily in liver.

The protein localises to the secreted. The catalysed reaction is The enzyme cleaves the von Willebrand factor at bond 842-Tyr-|-Met-843 within the A2 domain.. Its activity is regulated as follows. Zinc and calcium ions cooperatively modulate enzyme activity. The cleavage of the pro-domain is not required for protease activity. Dependence on calcium for proteolytic activity is mediated by the high affinity site. Its function is as follows. Cleaves the vWF multimers in plasma into smaller forms thereby controlling vWF-mediated platelet thrombus formation. This is A disintegrin and metalloproteinase with thrombospondin motifs 13 (ADAMTS13) from Homo sapiens (Human).